The chain runs to 1054 residues: CCAAT/enhancer-binding protein zeta (1054 aa).

The span at 1–20 shows a compositional bias: basic and acidic residues; sequence MAAVKEPLEFHAKRPWRPEE. 2 disordered regions span residues 1–42 and 102–160; these read MAAV…GFSL and VEED…PKVK. Positions 21 to 34 are enriched in acidic residues; the sequence is AVEDPDEEDEDNTS. Positions 109–120 are enriched in basic and acidic residues; sequence EKENSSKKEVKI. Phosphoserine is present on serine 113. Polar residues predominate over residues 124-138; the sequence is NNKNTAESQRTSVNK. Phosphoserine is present on serine 629. An N6-acetyllysine modification is found at lysine 695. Serine 835 bears the Phosphoserine mark. Disordered regions lie at residues 873-902 and 915-969; these read RTKG…DEVS and DEDG…KKRN. Acidic residues-rich tracts occupy residues 882–902 and 915–933; these read LDED…DEVS and DEDG…ESVP. 3 positions are modified to phosphoserine: serine 959, serine 973, and serine 978. Residues 1031-1054 form a disordered region; that stretch reads IIKKKKHFKKKRIKTTQKTKKQRK.

It belongs to the CBF/MAK21 family.

It is found in the nucleus. In terms of biological role, stimulates transcription from the HSP70 promoter. The chain is CCAAT/enhancer-binding protein zeta (CEBPZ) from Homo sapiens (Human).